The chain runs to 94 residues: Aspartyl/glutamyl-tRNA(Asn/Gln) amidotransferase subunit C (94 aa).

It belongs to the GatC family. Heterotrimer of A, B and C subunits.

It carries out the reaction L-glutamyl-tRNA(Gln) + L-glutamine + ATP + H2O = L-glutaminyl-tRNA(Gln) + L-glutamate + ADP + phosphate + H(+). The catalysed reaction is L-aspartyl-tRNA(Asn) + L-glutamine + ATP + H2O = L-asparaginyl-tRNA(Asn) + L-glutamate + ADP + phosphate + 2 H(+). Functionally, allows the formation of correctly charged Asn-tRNA(Asn) or Gln-tRNA(Gln) through the transamidation of misacylated Asp-tRNA(Asn) or Glu-tRNA(Gln) in organisms which lack either or both of asparaginyl-tRNA or glutaminyl-tRNA synthetases. The reaction takes place in the presence of glutamine and ATP through an activated phospho-Asp-tRNA(Asn) or phospho-Glu-tRNA(Gln). In Nitratidesulfovibrio vulgaris (strain ATCC 29579 / DSM 644 / CCUG 34227 / NCIMB 8303 / VKM B-1760 / Hildenborough) (Desulfovibrio vulgaris), this protein is Aspartyl/glutamyl-tRNA(Asn/Gln) amidotransferase subunit C.